A 524-amino-acid chain; its full sequence is G1/S-specific cyclin-E (524 aa).

Residues 1–155 (MAGRKSSRTA…EESHEMVRLE (155 aa)) form a disordered region. The segment covering 18–47 (KPERKSAILSPHDELRERLLETAIDMKENI) has biased composition (basic and acidic residues). Residues 48–62 (PQRNTRNSSVGSQKS) show a composition bias toward polar residues. Composition is skewed to basic and acidic residues over residues 63-78 (DCSETRKRRSTKEGPA), 86-95 (KHRNGSREDS), and 146-155 (EESHEMVRLE).

This sequence belongs to the cyclin family. Cyclin E subfamily. In terms of assembly, interacts with a member of the CDK2/CDK protein kinases to form a serine/threonine kinase holoenzyme complex. The cyclin subunit imparts substrate specificity to the complex. In terms of tissue distribution, expressed dynamically in proliferating cells throughout development. Detectable in larval blast cells undergoing active proliferation that give rise to all tissue types, including germline, intestine, hypodermis, neurons, and muscle.

It localises to the nucleus. Its subcellular location is the cytoplasm. The protein resides in the cytoskeleton. The protein localises to the microtubule organizing center. It is found in the centrosome. It localises to the centriole. Functionally, essential for the control of the cell cycle at the G1/S (start) transition. In association with cdk-2, regulates proliferation, quiescent state and cell fate during the development of several cell lineages. In the embryo, initiates the establishment of cell polarity through the recruitment of the centrosomal proteins spd-2 and spd-5 during prophase. During the development of the vulva, controls the onset of vulval cell terminal differentiation by controlling the duration of G1 phase. During hypoderm development at early larval stages, controls syncytial fate of seam cell daughter cells. Involved in the progression of cell division in the intestinal lineage in larvae, and in particular in endoreplication, a specific growth pathway in the intestinal epithelium, required for feeding and gut development in growing larvae. By controlling the activity of translational repressor gld-1, regulates the pool of germline stem cells and the size of the mitotic zone by preventing entry into meiosis. In addition, repression of expression by gld-1 prevents mitosis re-entry in meiotic germline cells. This Caenorhabditis elegans protein is G1/S-specific cyclin-E.